A 310-amino-acid chain; its full sequence is Epoxyqueuosine reductase (310 aa).

Aspartate 133 functions as the Proton donor in the catalytic mechanism. Residues 179 to 208 (YDNPSDKDYCGTCTRCVDACPTDAILQDNL) enclose the 4Fe-4S ferredoxin-type domain. [4Fe-4S] cluster is bound by residues cysteine 188, cysteine 191, cysteine 194, cysteine 198, cysteine 214, cysteine 241, cysteine 244, and cysteine 248.

The protein belongs to the QueG family. In terms of assembly, monomer. Cob(II)alamin serves as cofactor. The cofactor is [4Fe-4S] cluster.

It localises to the cytoplasm. It catalyses the reaction epoxyqueuosine(34) in tRNA + AH2 = queuosine(34) in tRNA + A + H2O. Its pathway is tRNA modification; tRNA-queuosine biosynthesis. In terms of biological role, catalyzes the conversion of epoxyqueuosine (oQ) to queuosine (Q), which is a hypermodified base found in the wobble positions of tRNA(Asp), tRNA(Asn), tRNA(His) and tRNA(Tyr). The polypeptide is Epoxyqueuosine reductase (Cyclobacterium marinum (strain ATCC 25205 / DSM 745 / LMG 13164 / NCIMB 1802) (Flectobacillus marinus)).